The following is a 168-amino-acid chain: Endoribonuclease YbeY (168 aa).

Histidine 122, histidine 126, and histidine 132 together coordinate Zn(2+).

It belongs to the endoribonuclease YbeY family. Zn(2+) is required as a cofactor.

The protein resides in the cytoplasm. Single strand-specific metallo-endoribonuclease involved in late-stage 70S ribosome quality control and in maturation of the 3' terminus of the 16S rRNA. The sequence is that of Endoribonuclease YbeY from Brucella abortus (strain 2308).